We begin with the raw amino-acid sequence, 1391 residues long: DNA-directed RNA polymerase subunit beta' (1391 aa).

4 residues coordinate Zn(2+): Cys-70, Cys-72, Cys-85, and Cys-88. Mg(2+) contacts are provided by Asp-461, Asp-463, and Asp-465. Residues Cys-809, Cys-882, Cys-889, and Cys-892 each coordinate Zn(2+).

It belongs to the RNA polymerase beta' chain family. The RNAP catalytic core consists of 2 alpha, 1 beta, 1 beta' and 1 omega subunit. When a sigma factor is associated with the core the holoenzyme is formed, which can initiate transcription. Mg(2+) serves as cofactor. Zn(2+) is required as a cofactor.

The enzyme catalyses RNA(n) + a ribonucleoside 5'-triphosphate = RNA(n+1) + diphosphate. In terms of biological role, DNA-dependent RNA polymerase catalyzes the transcription of DNA into RNA using the four ribonucleoside triphosphates as substrates. The sequence is that of DNA-directed RNA polymerase subunit beta' from Zymomonas mobilis subsp. mobilis (strain ATCC 31821 / ZM4 / CP4).